The following is a 346-amino-acid chain: Probable WRKY transcription factor 54 (346 aa).

The tract at residues 109–130 (PVSCNGGDSGESKKKRLGVGKG) is disordered. The segment covering 121–130 (KKKRLGVGKG) has biased composition (basic residues). A DNA-binding region (WRKY) is located at residues 146–214 (VEAKSSEDRY…YIGYHTCTAN (69 aa)). The segment covering 267–282 (VKEEQNNNGDQSKDYY) has biased composition (basic and acidic residues). Positions 267 to 286 (VKEEQNNNGDQSKDYYEGSS) are disordered.

Belongs to the WRKY group III family. As to quaternary structure, interacts with WRKY30. Binds to BZR2/BES1 to cooperatively regulate the expression of target genes. Interacts with ASK7/BIN2. Phosphorylated and destabilized by ASK7/BIN2. In terms of tissue distribution, expressed in leaves.

The protein resides in the nucleus. In terms of biological role, transcription factor. Interacts specifically with the W box (5'-(T)TGAC[CT]-3'), a frequently occurring elicitor-responsive cis-acting element. Together with WRKY70, negative regulator of developmental senescence, probably via the regulation of several senescence-associated markers genes. Positive regulator of EDS1-dependent defense against E.amylovora. In collaboration with WRKY70, prevents stomatal closure and, consequently, osmotic stress tolerance. Together with WRKY46 and WRKY70, promotes brassinosteroid (BR)-regulated plant growth but prevent drought response by modulating gene expression. Negative regulator of SA biosynthesis. Prevents defense response to the necrotrophic pathogens P.carotovorum and B.cinerea, but promotes defense against biotrophic/hemibiotrophic pathogens P.syringae pv. tomato (Pst) DC3000, probably by regulating negatively the jasmonic acid (JA)/ethylene (ET) and positively the salicylic acid (SA) signaling pathways. The protein is Probable WRKY transcription factor 54 of Arabidopsis thaliana (Mouse-ear cress).